Reading from the N-terminus, the 413-residue chain is MSILSTLDPEVADAIRLEADRQEYNLELIASENFVSTAVLEAQGSVLTNKYAEGYPGKRYYGGCHNVDIVEALAIERAKQLFDAEHANVQPHSGSQANMAVYFSALKPGDTILGMNLSHGGHLTHGSPVNFSGRFFNVVPYGVSPETQTIDYAEVERLALEHKPKMIVVGASAYPRTIDFAAFRAIADKVGALVMVDMAHIAGLVAAGLHPSPIPHAEFVTTTTHKTLRGPRGGMILCQERFAKSINSQIFPGIQGGPLMHVIAAKAVAFKEALQPEFKQYQQQVVNNARTLAEELVKRGFKLTSGGTDNHLMLLDFSGTEITGKAAEEALDKAGITANKNTVPFETRSPFVTSGIRIGTPAATTHGLKEAEMVLVAGFIADAVANIGSDETLAAIKLQVNQLMKKFPLYAKG.

Residues Leu-117 and 121–123 (GHL) contribute to the (6S)-5,6,7,8-tetrahydrofolate site. At Lys-226 the chain carries N6-(pyridoxal phosphate)lysine. 349–351 (SPF) contacts (6S)-5,6,7,8-tetrahydrofolate.

The protein belongs to the SHMT family. Homodimer. The cofactor is pyridoxal 5'-phosphate.

It localises to the cytoplasm. The enzyme catalyses (6R)-5,10-methylene-5,6,7,8-tetrahydrofolate + glycine + H2O = (6S)-5,6,7,8-tetrahydrofolate + L-serine. It participates in one-carbon metabolism; tetrahydrofolate interconversion. Its pathway is amino-acid biosynthesis; glycine biosynthesis; glycine from L-serine: step 1/1. Functionally, catalyzes the reversible interconversion of serine and glycine with tetrahydrofolate (THF) serving as the one-carbon carrier. This reaction serves as the major source of one-carbon groups required for the biosynthesis of purines, thymidylate, methionine, and other important biomolecules. Also exhibits THF-independent aldolase activity toward beta-hydroxyamino acids, producing glycine and aldehydes, via a retro-aldol mechanism. This chain is Serine hydroxymethyltransferase, found in Pelobacter propionicus (strain DSM 2379 / NBRC 103807 / OttBd1).